The sequence spans 276 residues: NADH-cytochrome b5 reductase 2 (276 aa).

The 113-residue stretch at 15–127 (EAKYPLPLIE…RGPTGRLFYN (113 aa)) folds into the FAD-binding FR-type domain. Residue Lys-17 is modified to N6-acetyllysine. Phosphotyrosine is present on Tyr-18. Residues 107-137 (ENMK…IKAN) and 146-181 (LVHH…RMSL) each bind FAD.

The protein belongs to the flavoprotein pyridine nucleotide cytochrome reductase family. It depends on FAD as a cofactor.

The catalysed reaction is 2 Fe(III)-[cytochrome b5] + NADH = 2 Fe(II)-[cytochrome b5] + NAD(+) + H(+). Functionally, NADH-cytochrome b5 reductases are involved in desaturation and elongation of fatty acids, cholesterol biosynthesis, drug metabolism, and, in erythrocyte, methemoglobin reduction. Responsible for NADH-dependent lucigenin chemiluminescence in spermatozoa by reducing both lucigenin and 2-[4-iodophenyl]-3-[4-nitrophenyl]-5-[2,4-disulfophenyl]-2H tetrazolium monosodium salt (WST-1). The sequence is that of NADH-cytochrome b5 reductase 2 (Cyb5r2) from Mus musculus (Mouse).